A 109-amino-acid polypeptide reads, in one-letter code: Protein reprimo (109 aa).

2 N-linked (GlcNAc...) asparagine glycosylation sites follow: N7 and N18. The helical transmembrane segment at 56 to 76 (VVQIAVMCVLSLTVVFGIFFL) threads the bilayer. At S98 the chain carries Phosphoserine.

Belongs to the reprimo family.

It is found in the cytoplasm. It localises to the membrane. In terms of biological role, may be involved in the regulation of p53-dependent G2 arrest of the cell cycle. Seems to induce cell cycle arrest by inhibiting CDK1 activity and nuclear translocation of the CDC2 cyclin B1 complex. This chain is Protein reprimo (RPRM), found in Bos taurus (Bovine).